The sequence spans 99 residues: uncharacterized protein (99 aa).

This is an uncharacterized protein from Mycobacterium tuberculosis (strain CDC 1551 / Oshkosh).